Reading from the N-terminus, the 198-residue chain is Ribonuclease HII (198 aa).

An RNase H type-2 domain is found at Leu5–Gly195. 3 residues coordinate a divalent metal cation: Asp11, Glu12, and Asp103.

Belongs to the RNase HII family. Requires Mn(2+) as cofactor. Mg(2+) serves as cofactor.

It is found in the cytoplasm. It catalyses the reaction Endonucleolytic cleavage to 5'-phosphomonoester.. Its function is as follows. Endonuclease that specifically degrades the RNA of RNA-DNA hybrids. This is Ribonuclease HII from Chromobacterium violaceum (strain ATCC 12472 / DSM 30191 / JCM 1249 / CCUG 213 / NBRC 12614 / NCIMB 9131 / NCTC 9757 / MK).